Consider the following 295-residue polypeptide: MEVLDKAVNGYIDHLLGPKDPRVKGWLLLDNYVPTIFFTALYLFIVWRGPKYMQNRQPVSCRSILVVYNLGLTLLSFYMFYELVTGVWEGGYNFFCQDTHSGGDADTKIIRVLWWYYFSKLIEFMDTFFFILRKNNHQITVLHVYHHASMLNIWWFVMNWVPCGHSFFGATLNSFIHVLMYSYYGLSAIPAIRPYLWWKKYITQCQLTQFVLTMTQTTCAMIWPCKFPMGWLYFQNSYMISLIILFTNFYLKTYNKKTSSRRKEYQNGSASAVNGYTNSFSSLEDNVKQRKQRQN.

7 helical membrane passes run 26 to 46, 64 to 84, 112 to 132, 150 to 170, 172 to 192, 207 to 223, and 227 to 247; these read WLLLDNYVPTIFFTALYLFIV, ILVVYNLGLTLLSFYMFYELV, VLWWYYFSKLIEFMDTFFFIL, MLNIWWFVMNWVPCGHSFFGA, LNSFIHVLMYSYYGLSAIPAI, LTQFVLTMTQTTCAMIW, and FPMGWLYFQNSYMISLIILFT. A disordered region spans residues 265–295; sequence YQNGSASAVNGYTNSFSSLEDNVKQRKQRQN. A compositionally biased stretch (polar residues) spans 266–284; it reads QNGSASAVNGYTNSFSSLE.

The protein belongs to the ELO family. ELOVL5 subfamily.

Its subcellular location is the endoplasmic reticulum membrane. The protein localises to the cell projection. It is found in the dendrite. The catalysed reaction is a very-long-chain acyl-CoA + malonyl-CoA + H(+) = a very-long-chain 3-oxoacyl-CoA + CO2 + CoA. It catalyses the reaction (6Z,9Z,12Z)-octadecatrienoyl-CoA + malonyl-CoA + H(+) = (8Z,11Z,14Z)-3-oxoeicosatrienoyl-CoA + CO2 + CoA. It carries out the reaction (9Z,12Z,15Z)-octadecatrienoyl-CoA + malonyl-CoA + H(+) = (11Z,14Z,17Z)-3-oxoeicosatrienoyl-CoA + CO2 + CoA. The enzyme catalyses (9Z)-hexadecenoyl-CoA + malonyl-CoA + H(+) = 3-oxo-(11Z)-octadecenoyl-CoA + CO2 + CoA. The catalysed reaction is (9Z)-octadecenoyl-CoA + malonyl-CoA + H(+) = 3-oxo-(11Z)-eicosenoyl-CoA + CO2 + CoA. It catalyses the reaction (11Z)-octadecenoyl-CoA + malonyl-CoA + H(+) = 3-oxo-(13Z)-eicosenoyl-CoA + CO2 + CoA. It carries out the reaction (9Z,12Z)-octadecadienoyl-CoA + malonyl-CoA + H(+) = (11Z,14Z)-3-oxoicosa-11,14-dienoyl-CoA + CO2 + CoA. The enzyme catalyses (6Z,9Z,12Z,15Z)-octadecatetraenoyl-CoA + malonyl-CoA + H(+) = (8Z,11Z,14Z,17Z)-3-oxoicosatetraenoyl-CoA + CO2 + CoA. The catalysed reaction is (5Z,8Z,11Z,14Z)-eicosatetraenoyl-CoA + malonyl-CoA + H(+) = (7Z,10Z,13Z,16Z)-3-oxodocosatetraenoyl-CoA + CO2 + CoA. It catalyses the reaction (5Z,8Z,11Z,14Z,17Z)-eicosapentaenoyl-CoA + malonyl-CoA + H(+) = 3-oxo-(7Z,10Z,13Z,16Z,19Z)-docosapentaenoyl-CoA + CO2 + CoA. Its pathway is lipid metabolism; polyunsaturated fatty acid biosynthesis. In terms of biological role, catalyzes the first and rate-limiting reaction of the four reactions that constitute the long-chain fatty acids elongation cycle. This endoplasmic reticulum-bound enzymatic process allows the addition of 2 carbons to the chain of long- and very long-chain fatty acids (VLCFAs) per cycle. Condensing enzyme that acts specifically toward polyunsaturated acyl-CoA with the higher activity toward C18:3(n-6) acyl-CoA. May participate in the production of monounsaturated and of polyunsaturated VLCFAs of different chain lengths that are involved in multiple biological processes as precursors of membrane lipids and lipid mediators. In conditions where the essential linoleic and alpha linoleic fatty acids are lacking it is also involved in the synthesis of Mead acid from oleic acid. The chain is Very long chain fatty acid elongase 5 from Xenopus laevis (African clawed frog).